A 204-amino-acid polypeptide reads, in one-letter code: MICKDVGVIGYAEALRIQEQLVAKVQQGGEEALLLLEHLPVYTIGAGGSRDNVLDPELEPVRVNRGGDVTYHGPGQLVCYPILDLSRRGRDLHRYLRFLERFLVELCAGLGVACHTVPGRTGVWTGNGKLASIGVGVRRWVSMHGFALNVSPDTAPFSRINPCGMPDCRITSLSLELGEELFVDDLKETVAIRFQPFLHLHLPR.

Residues 27–202 enclose the BPL/LPL catalytic domain; the sequence is QGGEEALLLL…RFQPFLHLHL (176 aa). Residues 65 to 72, 132 to 134, and 145 to 147 contribute to the substrate site; these read RGGDVTYH, SIG, and GFA. The Acyl-thioester intermediate role is filled by Cys163.

Belongs to the LipB family.

It is found in the cytoplasm. It carries out the reaction octanoyl-[ACP] + L-lysyl-[protein] = N(6)-octanoyl-L-lysyl-[protein] + holo-[ACP] + H(+). It functions in the pathway protein modification; protein lipoylation via endogenous pathway; protein N(6)-(lipoyl)lysine from octanoyl-[acyl-carrier-protein]: step 1/2. In terms of biological role, catalyzes the transfer of endogenously produced octanoic acid from octanoyl-acyl-carrier-protein onto the lipoyl domains of lipoate-dependent enzymes. Lipoyl-ACP can also act as a substrate although octanoyl-ACP is likely to be the physiological substrate. The protein is Octanoyltransferase of Geobacter sp. (strain M21).